The chain runs to 708 residues: ABC transporter G family member 18 (708 aa).

Residues 75–317 form the ABC transporter domain; that stretch reads RRRFDFSRRK…FSSFGRPIPE (243 aa). 109 to 116 contributes to the ATP binding site; it reads GGSGAGKS. The region spanning 402–612 is the ABC transmembrane type-2 domain; sequence AETFILAKRY…PYEAVLINEF (211 aa). 7 helical membrane passes run 421-441, 456-476, 508-528, 537-557, 560-580, 589-609, and 681-701; these read LIGM…TVYW, FFAF…PVFI, LLAL…LSGG, LIIY…SGLI, VMMS…LGGF, LYWI…AVLI, and LWIT…SLLF.

This sequence belongs to the ABC transporter superfamily. ABCG family. Eye pigment precursor importer (TC 3.A.1.204) subfamily.

The protein resides in the membrane. The chain is ABC transporter G family member 18 (ABCG18) from Arabidopsis thaliana (Mouse-ear cress).